A 175-amino-acid chain; its full sequence is Cytidylate kinase (175 aa).

7 to 15 (GLPGSGTTT) serves as a coordination point for ATP.

This sequence belongs to the cytidylate kinase family. Type 2 subfamily.

It is found in the cytoplasm. The enzyme catalyses CMP + ATP = CDP + ADP. It catalyses the reaction dCMP + ATP = dCDP + ADP. The chain is Cytidylate kinase from Methanococcoides burtonii (strain DSM 6242 / NBRC 107633 / OCM 468 / ACE-M).